The following is a 299-amino-acid chain: UDP-N-acetylenolpyruvoylglucosamine reductase (299 aa).

Positions 28 to 193 constitute an FAD-binding PCMH-type domain; that stretch reads KVGGPADILA…LSAKFELQAG (166 aa). Arginine 172 is a catalytic residue. The active-site Proton donor is the serine 222. Glutamate 292 is an active-site residue.

FAD is required as a cofactor.

The protein localises to the cytoplasm. The catalysed reaction is UDP-N-acetyl-alpha-D-muramate + NADP(+) = UDP-N-acetyl-3-O-(1-carboxyvinyl)-alpha-D-glucosamine + NADPH + H(+). The protein operates within cell wall biogenesis; peptidoglycan biosynthesis. Functionally, cell wall formation. The sequence is that of UDP-N-acetylenolpyruvoylglucosamine reductase from Lactococcus lactis subsp. cremoris (strain MG1363).